The following is a 441-amino-acid chain: Ribosomal protein uS12 methylthiotransferase RimO (441 aa).

The MTTase N-terminal domain occupies 6 to 116; the sequence is PKVGFVSLGC…VMTAVHANLP (111 aa). Residues Cys15, Cys51, Cys80, Cys147, Cys151, and Cys154 each contribute to the [4Fe-4S] cluster site. One can recognise a Radical SAM core domain in the interval 133–370; it reads LTPQHYAYLK…MEVQESISAE (238 aa). The 67-residue stretch at 373-439 folds into the TRAM domain; the sequence is RRKIGRIETV…GHDLWAAPPA (67 aa).

Belongs to the methylthiotransferase family. RimO subfamily. Requires [4Fe-4S] cluster as cofactor.

It is found in the cytoplasm. The enzyme catalyses L-aspartate(89)-[ribosomal protein uS12]-hydrogen + (sulfur carrier)-SH + AH2 + 2 S-adenosyl-L-methionine = 3-methylsulfanyl-L-aspartate(89)-[ribosomal protein uS12]-hydrogen + (sulfur carrier)-H + 5'-deoxyadenosine + L-methionine + A + S-adenosyl-L-homocysteine + 2 H(+). Its function is as follows. Catalyzes the methylthiolation of an aspartic acid residue of ribosomal protein uS12. The chain is Ribosomal protein uS12 methylthiotransferase RimO from Methylobacillus flagellatus (strain ATCC 51484 / DSM 6875 / VKM B-1610 / KT).